A 291-amino-acid polypeptide reads, in one-letter code: ATP synthase gamma chain (291 aa).

Belongs to the ATPase gamma chain family. F-type ATPases have 2 components, CF(1) - the catalytic core - and CF(0) - the membrane proton channel. CF(1) has five subunits: alpha(3), beta(3), gamma(1), delta(1), epsilon(1). CF(0) has three main subunits: a, b and c.

Its subcellular location is the cell inner membrane. Functionally, produces ATP from ADP in the presence of a proton gradient across the membrane. The gamma chain is believed to be important in regulating ATPase activity and the flow of protons through the CF(0) complex. In Pelodictyon phaeoclathratiforme (strain DSM 5477 / BU-1), this protein is ATP synthase gamma chain.